We begin with the raw amino-acid sequence, 135 residues long: Small ribosomal subunit protein bS16 (135 aa).

The segment at 94–135 is disordered; that stretch reads IGTEMETWQQRNDSRLKRGLDRKAIRRKRKKEAEAKEKESAG. 2 stretches are compositionally biased toward basic and acidic residues: residues 105 to 116 and 124 to 135; these read NDSRLKRGLDRK and KEAEAKEKESAG.

Belongs to the bacterial ribosomal protein bS16 family.

The sequence is that of Small ribosomal subunit protein bS16 from Chloroherpeton thalassium (strain ATCC 35110 / GB-78).